Here is a 450-residue protein sequence, read N- to C-terminus: DNA primase DnaG (450 aa).

Residues 199–273 enclose the Toprim domain; sequence DSIIVVEGRA…DVDYVARAPE (75 aa). Mg(2+) contacts are provided by glutamate 205, aspartate 247, and aspartate 249. A compositionally biased stretch (basic and acidic residues) spans 320–348; the sequence is APSKEVKPAPKHEPKPQPVEQKPREEKII. The tract at residues 320–350 is disordered; the sequence is APSKEVKPAPKHEPKPQPVEQKPREEKIIRP.

It belongs to the archaeal DnaG primase family. As to quaternary structure, forms a ternary complex with MCM helicase and DNA. Component of the archaeal exosome complex. Mg(2+) is required as a cofactor.

The enzyme catalyses ssDNA + n NTP = ssDNA/pppN(pN)n-1 hybrid + (n-1) diphosphate.. In terms of biological role, RNA polymerase that catalyzes the synthesis of short RNA molecules used as primers for DNA polymerase during DNA replication. Also part of the exosome, which is a complex involved in RNA degradation. Acts as a poly(A)-binding protein that enhances the interaction between heteromeric, adenine-rich transcripts and the exosome. The protein is DNA primase DnaG of Thermococcus gammatolerans (strain DSM 15229 / JCM 11827 / EJ3).